A 260-amino-acid polypeptide reads, in one-letter code: MQFDVITLFPEMFRALTDWGITSRAAKQQRYALRTWNPRDFTVDNYRTIDDRPYGGGPGMVMLAKPLEDAIDAAAAAQSDAGVGRPHVVLMSPQGATLTHEKVMALSQRPGLVLLCGRYEAIDQRLIDRRVDEEISLGDFVLSGGELPAMALIDAVVRHLPGVLGDAQSAVQDSFVNGLLDCPHYTRPEEYEGVRVPDVLLGGHHAEIEKWRRRQALANTARKRPDLIVAAREQGLLSKADEKFLSELAAKAGQEFAPAK.

Residues Gly-117 and 137 to 142 (LGDFVL) each bind S-adenosyl-L-methionine.

The protein belongs to the RNA methyltransferase TrmD family. In terms of assembly, homodimer.

The protein resides in the cytoplasm. The enzyme catalyses guanosine(37) in tRNA + S-adenosyl-L-methionine = N(1)-methylguanosine(37) in tRNA + S-adenosyl-L-homocysteine + H(+). Specifically methylates guanosine-37 in various tRNAs. The chain is tRNA (guanine-N(1)-)-methyltransferase from Cupriavidus metallidurans (strain ATCC 43123 / DSM 2839 / NBRC 102507 / CH34) (Ralstonia metallidurans).